Reading from the N-terminus, the 202-residue chain is Large ribosomal subunit protein uL18 (202 aa).

It belongs to the universal ribosomal protein uL18 family. As to quaternary structure, part of the 50S ribosomal subunit. Contacts the 5S and 23S rRNAs.

Functionally, this is one of the proteins that bind and probably mediate the attachment of the 5S RNA into the large ribosomal subunit, where it forms part of the central protuberance. In Staphylothermus marinus (strain ATCC 43588 / DSM 3639 / JCM 9404 / F1), this protein is Large ribosomal subunit protein uL18.